A 345-amino-acid chain; its full sequence is Dihydroorotase (345 aa).

Residues H13 and H15 each contribute to the Zn(2+) site. Residues 15–17 (HFR) and N41 each bind substrate. K98, H135, and H173 together coordinate Zn(2+). The residue at position 98 (K98) is an N6-carboxylysine. Residue H135 participates in substrate binding. L218 lines the substrate pocket. D246 is a binding site for Zn(2+). The active site involves D246. H250 and A262 together coordinate substrate.

This sequence belongs to the metallo-dependent hydrolases superfamily. DHOase family. Class II DHOase subfamily. As to quaternary structure, homodimer. Zn(2+) serves as cofactor.

The catalysed reaction is (S)-dihydroorotate + H2O = N-carbamoyl-L-aspartate + H(+). It participates in pyrimidine metabolism; UMP biosynthesis via de novo pathway; (S)-dihydroorotate from bicarbonate: step 3/3. Catalyzes the reversible cyclization of carbamoyl aspartate to dihydroorotate. In Shewanella halifaxensis (strain HAW-EB4), this protein is Dihydroorotase.